The following is a 316-amino-acid chain: Porphobilinogen deaminase (316 aa).

Cys249 bears the S-(dipyrrolylmethanemethyl)cysteine mark.

It belongs to the HMBS family. Monomer. Dipyrromethane is required as a cofactor.

It catalyses the reaction 4 porphobilinogen + H2O = hydroxymethylbilane + 4 NH4(+). It functions in the pathway porphyrin-containing compound metabolism; protoporphyrin-IX biosynthesis; coproporphyrinogen-III from 5-aminolevulinate: step 2/4. Its function is as follows. Tetrapolymerization of the monopyrrole PBG into the hydroxymethylbilane pre-uroporphyrinogen in several discrete steps. In Nitrobacter winogradskyi (strain ATCC 25391 / DSM 10237 / CIP 104748 / NCIMB 11846 / Nb-255), this protein is Porphobilinogen deaminase.